We begin with the raw amino-acid sequence, 102 residues long: Late embryogenesis abundant protein D-19 (102 aa).

The tract at residues 1-102 (MASEQYQAMR…IDESKFRTKN (102 aa)) is disordered. The span at 48–58 (EGRHKGGETRK) shows a compositional bias: basic and acidic residues.

This sequence belongs to the small hydrophilic plant seed protein family.

Functionally, LEA proteins are late embryonic proteins abundant in higher plant seed embryos. There are two subsets of LEA proteins (5a and 5b), the first ones are expressed when the cotyledon weight reach 80 mg and the second set are expressed above 100 mg. The function of those proteins is not known. This chain is Late embryogenesis abundant protein D-19, found in Gossypium hirsutum (Upland cotton).